Consider the following 1033-residue polypeptide: Probable beta-glucosidase E (1033 aa).

Positions 1 to 71 (MAPPDSTHGG…RSGSYKLRPV (71 aa)) are disordered. Over 1-161 (MAPPDSTHGG…PVKYARIWWR (161 aa)) the chain is Cytoplasmic. 2 stretches are compositionally biased toward basic and acidic residues: residues 11–20 (SFRDHLKTND) and 59–71 (DLERSGSYKLRPV). A helical; Signal-anchor for type II membrane protein transmembrane segment spans residues 162 to 182 (TLLAVVVTLVVVVWGFLSFAV). The Extracellular segment spans residues 183 to 1033 (SHREEPTVWP…SRDLPLMGEY (851 aa)). N-linked (GlcNAc...) asparagine glycans are attached at residues Asn224, Asn232, and Asn418. Residue Asp446 is part of the active site. N-linked (GlcNAc...) asparagine glycosylation is found at Asn489, Asn528, Asn593, Asn909, Asn918, and Asn976.

Belongs to the glycosyl hydrolase 3 family.

Its subcellular location is the cell membrane. It catalyses the reaction Hydrolysis of terminal, non-reducing beta-D-glucosyl residues with release of beta-D-glucose.. It participates in glycan metabolism; cellulose degradation. Its function is as follows. Beta-glucosidases are one of a number of cellulolytic enzymes involved in the degradation of cellulosic biomass. Catalyzes the last step releasing glucose from the inhibitory cellobiose. This Aspergillus fumigatus (strain CBS 144.89 / FGSC A1163 / CEA10) (Neosartorya fumigata) protein is Probable beta-glucosidase E (bglE).